We begin with the raw amino-acid sequence, 266 residues long: 2-Cys peroxiredoxin BAS1, chloroplastic (266 aa).

Positions 1-16 (MASVASSTTLISSPSS) are enriched in low complexity. The segment at 1-25 (MASVASSTTLISSPSSRVFPAKSSL) is disordered. The N-terminal 65 residues, 1 to 65 (MASVASSTTL…SSTSRRSFAV (65 aa)), are a transit peptide targeting the chloroplast. The 160-residue stretch at 73–232 (PLVGNKAPDF…TMRTLQALQY (160 aa)) folds into the Thioredoxin domain. C119 serves as the catalytic Cysteine sulfenic acid (-SOH) intermediate.

This sequence belongs to the peroxiredoxin family. AhpC/Prx1 subfamily. Homodimer; disulfide-linked, upon oxidation. Interacts with the plastidial thioredoxin CDSP32. Interacts with the plastidial NADPH-dependent thioredoxin reductase ANTR-C.

It is found in the plastid. Its subcellular location is the chloroplast. The catalysed reaction is a hydroperoxide + [thioredoxin]-dithiol = an alcohol + [thioredoxin]-disulfide + H2O. Its function is as follows. Thiol-specific peroxidase that catalyzes the reduction of hydrogen peroxide and organic hydroperoxides to water and alcohols, respectively. Plays a role in cell protection against oxidative stress by detoxifying peroxides. May be an antioxidant enzyme particularly in the developing shoot and photosynthesizing leaf. The sequence is that of 2-Cys peroxiredoxin BAS1, chloroplastic (BAS1) from Arabidopsis thaliana (Mouse-ear cress).